The primary structure comprises 340 residues: MANPLISNHIGKHGKYTQAFLEQNGPGDARPTALDILKDNDRIDNMKDKVFLLTGSSGGIGIETGRALAATGGKVYLGVRDLEKGKQALAEILEPGRVELLELDVGSMESVRTAAKTFLSKSTQLNVLVNNAGIMACPEAKTVDGFESQLAINYLGHFLLYKLLEQTLLSSSTPEFQSRVVNVSSAGHHMSSVVLDNINLEGEYEPWKAYGNAKTACIWMTNEIEHRYGSKGLHGLSLMPGGIATSLQRHVDPETLKEWGSSEFAQKYAKSSAQGAATTITAALGKEWEGKGGVYLEDCQEAGPVPEGGTLAVGVAPHAFDPEGEKKLWDLSLKMLNLSE.

Ile60, Lys84, Asp104, Asn131, and Lys162 together coordinate NADP(+). Ser184 serves as the catalytic Proton donor. Residues Tyr210 and Lys214 each contribute to the NADP(+) site. Tyr210 acts as the Proton acceptor in catalysis. Lys214 functions as the Lowers pKa of active site Tyr in the catalytic mechanism.

The protein belongs to the short-chain dehydrogenases/reductases (SDR) family.

It functions in the pathway sesquiterpene biosynthesis. Functionally, short-chain dehydrogenase/reductase; part of the gene cluster that mediates the biosynthesis of PR-toxin, a bicyclic sesquiterpene belonging to the eremophilane class and acting as a mycotoxin. The first step of the pathway is catalyzed by the aristolochene synthase which performs the cyclization of trans,trans-farnesyl diphosphate (FPP) to the bicyclic sesquiterpene aristolochene. Following the formation of aristolochene, the non-oxygenated aristolochene is converted to the trioxygenated intermediate eremofortin B, via 7-epi-neopetasone. This conversion appears to involve three enzymes, a hydroxysterol oxidase-like enzyme, the quinone-oxidase prx3 that forms the quinone-type-structure in the bicyclic nucleus of aristolochene with the C8-oxo group and the C-3 hydroxyl group, and the P450 monooxygenase ORF6 that introduces the epoxide at the double bond between carbons 1 and 2. No monoxy or dioxy-intermediates have been reported to be released to the broth, so these three early oxidative reactions may be coupled together. Eremofortin B is further oxidized by another P450 monooxygenase, that introduces a second epoxide between carbons 7 and 11 prior to acetylation to eremofortin A by the acetyltransferase ORF8. The second epoxidation may be performed by a second P450 monooxygenase. After the acetylation step, eremofortin A is converted to eremofortin C and then to PR-toxin. First the conversion of eremofortin A to eremofortin C proceeds by oxidation of the side chain of the molecule at C-12 and is catalyzed by the short-chain oxidoreductase prx1. The cytochrome P450 monooxygenase ORF6 is probably also involved in this step. The primary alcohol formed at C-12 is finally oxidized by the short-chain alcohol dehydrogenase prx4 that forms PR-toxin. This is Short-chain dehydrogenase/reductase prx1 from Penicillium roqueforti (strain FM164).